Reading from the N-terminus, the 455-residue chain is Exodeoxyribonuclease 7 large subunit (455 aa).

The protein belongs to the XseA family. Heterooligomer composed of large and small subunits.

Its subcellular location is the cytoplasm. The enzyme catalyses Exonucleolytic cleavage in either 5'- to 3'- or 3'- to 5'-direction to yield nucleoside 5'-phosphates.. Its function is as follows. Bidirectionally degrades single-stranded DNA into large acid-insoluble oligonucleotides, which are then degraded further into small acid-soluble oligonucleotides. The chain is Exodeoxyribonuclease 7 large subunit from Oceanobacillus iheyensis (strain DSM 14371 / CIP 107618 / JCM 11309 / KCTC 3954 / HTE831).